The following is a 364-amino-acid chain: Cell division protein FtsZ 1 (364 aa).

GTP-binding positions include 47–48 (GA), 97–99 (AGG), 134–136 (GTG), E165, R169, and D212.

The protein belongs to the FtsZ family. Homodimer. Polymerizes to form a dynamic ring structure in a strictly GTP-dependent manner. Interacts directly with several other division proteins.

Its subcellular location is the cytoplasm. In terms of biological role, essential cell division protein that forms a contractile ring structure (Z ring) at the future cell division site. The regulation of the ring assembly controls the timing and the location of cell division. One of the functions of the FtsZ ring is to recruit other cell division proteins to the septum to produce a new cell wall between the dividing cells. Binds GTP and shows GTPase activity. The sequence is that of Cell division protein FtsZ 1 from Methanocaldococcus jannaschii (strain ATCC 43067 / DSM 2661 / JAL-1 / JCM 10045 / NBRC 100440) (Methanococcus jannaschii).